Here is a 156-residue protein sequence, read N- to C-terminus: MFARLANPAHFKPLTGSHITRAAKRLYHPKVIDHYTNPRNVGSMDKSLANVGTGIVGAPACGDVIKLQIQVNDKSGIIENVKFKTFGCGSAIASSSYMTELVRGMSLDEAVKIKNTEIAKELSLPPVKLHCSMLAEDAIKAAIKDYKTKRNPSVLH.

Residues 1–26 (MFARLANPAHFKPLTGSHITRAAKRL) constitute a mitochondrion transit peptide.

Belongs to the NifU family. As to quaternary structure, component of the core Fe-S cluster (ISC) assembly machinery. Interacts with frataxin. Interacts with the mitochondrial co-chaperones JAC1 and SSQ1. Interacts with NFS1. Interacts with ferredoxin YAH1; interacts with the reduced form. Requires [2Fe-2S] cluster as cofactor.

The protein resides in the mitochondrion matrix. The protein operates within cofactor biosynthesis; iron-sulfur cluster biosynthesis. In terms of biological role, scaffold protein for the de novo synthesis of iron-sulfur (Fe-S) clusters within mitochondria, which is required for maturation of both mitochondrial and cytoplasmic [2Fe-2S] and [4Fe-4S] proteins. First, a [2Fe-2S] cluster is transiently assembled on the scaffold proteins ISU1 and ISU2. In a second step, the cluster is released from ISU1/ISU2, transferred to glutaredoxin GRX5, followed by the formation of mitochondrial [2Fe-2S] proteins, the synthesis of [4Fe-4S] clusters and their target-specific insertion into the recipient apoproteins. Cluster assembly on ISU1/ISU2 depends on the function of the cysteine desulfurase complex NFS1-ISD11, which serves as the sulfur donor for cluster synthesis, the iron-binding protein frataxin (YFH1) as the putative iron donor, and the electron transfer chain comprised of ferredoxin reductase ARH1 and ferredoxin YAH1, which receive their electrons from NADH. Fe-S cluster release from ISU1/ISU2 is achieved by interaction with the Hsp70 chaperone SSQ1, assisted by the DnaJ-like co-chaperone JAC1 and the nucleotide exchange factor MGE1. ISU1 is the major isoform in yeast, while ISU2 is not detectable in cells grown to stationary phase. Also involved in production of a sulfur precursor required for thiolation of cytoplasmic tRNAs. This chain is Iron sulfur cluster assembly protein 2, mitochondrial, found in Saccharomyces cerevisiae (strain ATCC 204508 / S288c) (Baker's yeast).